The chain runs to 22 residues: Peptide PGLa-B1 (22 aa).

The residue at position 22 (leucine 22) is a Leucine amide.

In terms of tissue distribution, expressed by the skin glands.

The protein localises to the secreted. Its function is as follows. Has antibacterial and antifungal activity. The protein is Peptide PGLa-B1 of Xenopus borealis (Kenyan clawed frog).